A 545-amino-acid chain; its full sequence is Membrane protein insertase YidC (545 aa).

The chain crosses the membrane as a helical span at residues 6–26 (NLLLIALLFVSFMIWQAWQTD). The interval 31-54 (PVAQTTQQTSNPATGDAASSAVPA) is disordered. The next 4 helical transmembrane spans lie at 342 to 362 (KFIH…TFIV), 417 to 437 (LGGC…YYML), 455 to 475 (LSAQ…MFFI), and 496 to 516 (PVIF…YYIV).

The protein belongs to the OXA1/ALB3/YidC family. Type 1 subfamily. Interacts with the Sec translocase complex via SecD. Specifically interacts with transmembrane segments of nascent integral membrane proteins during membrane integration.

The protein localises to the cell inner membrane. Required for the insertion and/or proper folding and/or complex formation of integral membrane proteins into the membrane. Involved in integration of membrane proteins that insert both dependently and independently of the Sec translocase complex, as well as at least some lipoproteins. Aids folding of multispanning membrane proteins. This Serratia proteamaculans (strain 568) protein is Membrane protein insertase YidC.